A 695-amino-acid chain; its full sequence is Centrosomal protein kizuna (695 aa).

Residues 1–12 (MPRGRGGGGGGL) show a composition bias toward gly residues. The interval 1–24 (MPRGRGGGGGGLRQASATSAPLAS) is disordered. The span at 15 to 24 (ASATSAPLAS) shows a compositional bias: low complexity. Coiled coils occupy residues 29–57 (ERVG…EYNK) and 102–132 (VEHL…LSKD). Disordered regions lie at residues 261–313 (EIGS…SDRE), 351–391 (HSAW…SDLT), 444–465 (QSFP…EKVP), and 633–695 (SEAS…FYDT). Composition is skewed to polar residues over residues 263–274 (GSSTQHSKSNLS) and 282–297 (LHSS…NSIT). 2 stretches are compositionally biased toward basic and acidic residues: residues 299–313 (LKCD…SDRE) and 360–377 (DLDH…KHEE). A compositionally biased stretch (low complexity) spans 382–391 (GSSCSSSDLT). A Phosphothreonine; by PLK1 modification is found at T391. The span at 448-465 (DSKREPSPDSPRQPEKVP) shows a compositional bias: basic and acidic residues. The span at 633 to 645 (SEASFSSSEGSPL) shows a compositional bias: low complexity. 3 positions are modified to phosphoserine: S667, S670, and S672. Basic and acidic residues predominate over residues 676–686 (AALRPRDHDMP).

The protein belongs to the kizuna family. Interacts with AKAP9, CEP72, ODF2, PCNT and TUBGCP2. Phosphorylation at Thr-391 by PLK1 is not needed for centrosomal localization or pericentriolar material expansion but is indispensable for spindle-pole stabilization.

Its subcellular location is the cytoplasm. The protein resides in the cytoskeleton. It is found in the microtubule organizing center. The protein localises to the centrosome. It localises to the cilium basal body. Centrosomal protein required for establishing a robust mitotic centrosome architecture that can endure the forces that converge on the centrosomes during spindle formation. Required for stabilizing the expanded pericentriolar material around the centriole. The sequence is that of Centrosomal protein kizuna (Kiz) from Mus musculus (Mouse).